The sequence spans 741 residues: ABC transporter D family member 2 (741 aa).

3 consecutive transmembrane segments (helical) span residues 39 to 59, 119 to 139, and 260 to 280; these read GSLGKKVFILLALGGGAFSLV, FLSLLYLTALLFARTMLSVSI, and VVVMGWGSPLLMFSYFIVSGF. Residues 131–409 form the ABC transmembrane type-1 domain; that stretch reads ARTMLSVSIA…LMVALSQAIG (279 aa). The ABC transporter domain occupies 518–740; the sequence is IKFENVSIVS…DDDHLKKPLS (223 aa). An ATP-binding site is contributed by 551–558; sequence GPNGSGKS.

The protein belongs to the ABC transporter superfamily. ABCD family. Peroxisomal fatty acyl CoA transporter (TC 3.A.1.203) subfamily.

The protein localises to the membrane. The chain is ABC transporter D family member 2 (abcD2) from Dictyostelium discoideum (Social amoeba).